Consider the following 118-residue polypeptide: Small ribosomal subunit protein uS13 (118 aa).

The segment at 92 to 118 is disordered; it reads KKHLPVRGQRTKTNARTRKGPRKPIKK.

The protein belongs to the universal ribosomal protein uS13 family. As to quaternary structure, part of the 30S ribosomal subunit. Forms a loose heterodimer with protein S19. Forms two bridges to the 50S subunit in the 70S ribosome.

Located at the top of the head of the 30S subunit, it contacts several helices of the 16S rRNA. In the 70S ribosome it contacts the 23S rRNA (bridge B1a) and protein L5 of the 50S subunit (bridge B1b), connecting the 2 subunits; these bridges are implicated in subunit movement. Contacts the tRNAs in the A and P-sites. The sequence is that of Small ribosomal subunit protein uS13 from Wigglesworthia glossinidia brevipalpis.